We begin with the raw amino-acid sequence, 34 residues long: Photosystem II reaction center protein Psb30 (34 aa).

A helical membrane pass occupies residues 6-26 (IVAQLLSLALVTLSGPAVIFL).

It belongs to the Psb30/Ycf12 family. PSII is composed of 1 copy each of membrane proteins PsbA, PsbB, PsbC, PsbD, PsbE, PsbF, PsbH, PsbI, PsbJ, PsbK, PsbL, PsbM, PsbT, PsbX, PsbY, PsbZ, Psb30/Ycf12, peripheral proteins of the oxygen-evolving complex and a large number of cofactors. It forms dimeric complexes.

The protein localises to the plastid. It localises to the chloroplast thylakoid membrane. In terms of biological role, a core subunit of photosystem II (PSII), probably helps stabilize the reaction center. This is Photosystem II reaction center protein Psb30 from Emiliania huxleyi (Coccolithophore).